Reading from the N-terminus, the 29-residue chain is Beta-theraphotoxin-Gr1a (29 aa).

Disulfide bonds link Cys2–Cys16, Cys9–Cys21, and Cys15–Cys25.

Belongs to the neurotoxin 30 (phrixotoxin) family. As to expression, expressed by the venom gland.

It is found in the secreted. Functionally, inhibits voltage-gated sodium channels Nav1.1/SCN1A (IC(50)=630 nM), Nav1.2/SCN2A (IC(50)=230 nM), Nav1.3/SCN3A (IC(50)=770 nM), Nav1.4/SCN4A (IC(50)=1290 nM), Nav1.6/SCN8A (IC(50)=630 nM), Nav1.7/SCN9A (IC(50)=15.3-1000 nM) and potassium channels Kv11.1/KCNH2 (IC(50)=4.2 uM). The chain is Beta-theraphotoxin-Gr1a from Grammostola rosea (Chilean rose tarantula).